The sequence spans 78 residues: Large ribosomal subunit protein bL28 (78 aa).

Belongs to the bacterial ribosomal protein bL28 family.

This chain is Large ribosomal subunit protein bL28, found in Erwinia tasmaniensis (strain DSM 17950 / CFBP 7177 / CIP 109463 / NCPPB 4357 / Et1/99).